Consider the following 613-residue polypeptide: MPDYRSKTSTQGRNMAGARALWRATGMKDEDFKKPIIAIANSFTQFVPGHVHLKDLGQLVAREIERAGGVAKEFNTIAVDDGIAMGHDGMLYSLPSREIIADAVEYMVNAHCADAIVCISNCDKITPGMLMAALRLNIPVIFVSGGPMEAGKTKLASHGLDLVDAMVIAADSSASDEKVAEYERSACPTCGSCSGMFTANSMNCLTEALGLALPGNGSTLATHADREQLFLTAGRTIVELCKRYYGENDDSVLPRSIANFKAFENAMMLDIAMGGSTNTILHLLAAAQEGEVAFDLRDIDRLSRKVPQLCKVAPNIQKYHMEDVHRAGGIFSILGSLARGGLLHTDLPTVHSRSMEEAIAKWDITQTDDEAVHTFFKAGPAGIPTQTAFSQSTRWETLDDDRENGCIRSFEHAYSQEGGLAVLYGNIALDGCVVKTAGVDESIHVFEGNAKIFESQDSAVRGILADEVKAGDIVIIRYEGPKGGPGMQEMLYPTSYLKSKGLGKACALLTDGRFSGGTSGLSIGHASPEAAAGGAIGLVRDGDKVLIDIPNRSINLQVSDEELAARRVEQDKKGWKPAEVRPRKVTTALKAYALLATSADKGAVRNKAMLEGL.

Asp-81 lines the Mg(2+) pocket. Cys-122 is a binding site for [2Fe-2S] cluster. Mg(2+)-binding residues include Asp-123 and Lys-124. Lys-124 carries the N6-carboxylysine modification. Cys-193 is a binding site for [2Fe-2S] cluster. Residue Glu-489 coordinates Mg(2+). Ser-515 (proton acceptor) is an active-site residue.

The protein belongs to the IlvD/Edd family. As to quaternary structure, homodimer. The cofactor is [2Fe-2S] cluster. Requires Mg(2+) as cofactor.

It carries out the reaction (2R)-2,3-dihydroxy-3-methylbutanoate = 3-methyl-2-oxobutanoate + H2O. The enzyme catalyses (2R,3R)-2,3-dihydroxy-3-methylpentanoate = (S)-3-methyl-2-oxopentanoate + H2O. Its pathway is amino-acid biosynthesis; L-isoleucine biosynthesis; L-isoleucine from 2-oxobutanoate: step 3/4. It functions in the pathway amino-acid biosynthesis; L-valine biosynthesis; L-valine from pyruvate: step 3/4. Functions in the biosynthesis of branched-chain amino acids. Catalyzes the dehydration of (2R,3R)-2,3-dihydroxy-3-methylpentanoate (2,3-dihydroxy-3-methylvalerate) into 2-oxo-3-methylpentanoate (2-oxo-3-methylvalerate) and of (2R)-2,3-dihydroxy-3-methylbutanoate (2,3-dihydroxyisovalerate) into 2-oxo-3-methylbutanoate (2-oxoisovalerate), the penultimate precursor to L-isoleucine and L-valine, respectively. This Pseudomonas putida (strain W619) protein is Dihydroxy-acid dehydratase.